We begin with the raw amino-acid sequence, 274 residues long: NAD-dependent protein deacylase (274 aa).

One can recognise a Deacetylase sirtuin-type domain in the interval 4-274 (CLLPSSDMDA…GELLPKALAP (271 aa)). Residue 29–48 (GAGVSAESGVPTFRGAGGLW) participates in NAD(+) binding. Positions 73 and 76 each coordinate substrate. Position 111–114 (111–114 (QNID)) interacts with NAD(+). Histidine 129 functions as the Proton acceptor in the catalytic mechanism. Zn(2+)-binding residues include cysteine 137, cysteine 140, cysteine 178, and cysteine 183. NAD(+)-binding positions include 220 to 222 (GTS), 246 to 248 (NME), and cysteine 264.

It belongs to the sirtuin family. Class III subfamily. The cofactor is Zn(2+).

The protein resides in the mitochondrion. It catalyses the reaction N(6)-malonyl-L-lysyl-[protein] + NAD(+) + H2O = 2''-O-malonyl-ADP-D-ribose + nicotinamide + L-lysyl-[protein]. It carries out the reaction N(6)-succinyl-L-lysyl-[protein] + NAD(+) + H2O = 2''-O-succinyl-ADP-D-ribose + nicotinamide + L-lysyl-[protein]. The enzyme catalyses N(6)-glutaryl-L-lysyl-[protein] + NAD(+) + H2O = 2''-O-glutaryl-ADP-D-ribose + nicotinamide + L-lysyl-[protein]. In terms of biological role, NAD-dependent lysine demalonylase, desuccinylase and deglutarylase that specifically removes malonyl, succinyl and glutaryl groups on target proteins. Has weak NAD-dependent protein deacetylase activity; however this activity may not be physiologically relevant in vivo. This chain is NAD-dependent protein deacylase, found in Daphnia pulex (Water flea).